A 580-amino-acid chain; its full sequence is Arginine--tRNA ligase (580 aa).

A 'HIGH' region motif is present at residues 137–147; the sequence is ANPTGPLHIGH.

It belongs to the class-I aminoacyl-tRNA synthetase family. Monomer.

It localises to the cytoplasm. It catalyses the reaction tRNA(Arg) + L-arginine + ATP = L-arginyl-tRNA(Arg) + AMP + diphosphate. The polypeptide is Arginine--tRNA ligase (Anaplasma phagocytophilum (strain HZ)).